The following is a 1003-amino-acid chain: UPF0182 protein Mkms_1433 (1003 aa).

Helical transmembrane passes span 18–38 (VLIGVALAAVVLLLIGPRFID), 63–83 (VVVFLVVSLLIGAIVFAGLAL), 114–134 (LFGFGVPAFIGILSGIVAQSY), 176–196 (FVATFLAFIANLLGHYLFGGI), 211–231 (IQLVTLVGILILLKAFAYWLD), 260–280 (KLILLAIAVICAVAVFSAIVL), and 288–308 (IGVVLLLLSSLVVGAGWPLVV). Residues 902–937 (ATGPAPANLPDGQPAAQPPNGQQPAAQTPGNQAGRA) show a composition bias toward low complexity. The interval 902 to 979 (ATGPAPANLP…MSGLQDAQRS (78 aa)) is disordered.

It belongs to the UPF0182 family.

The protein localises to the cell membrane. This Mycobacterium sp. (strain KMS) protein is UPF0182 protein Mkms_1433.